The chain runs to 191 residues: Leucyl/phenylalanyl-tRNA--protein transferase (191 aa).

This sequence belongs to the L/F-transferase family.

It is found in the cytoplasm. The catalysed reaction is N-terminal L-lysyl-[protein] + L-leucyl-tRNA(Leu) = N-terminal L-leucyl-L-lysyl-[protein] + tRNA(Leu) + H(+). It catalyses the reaction N-terminal L-arginyl-[protein] + L-leucyl-tRNA(Leu) = N-terminal L-leucyl-L-arginyl-[protein] + tRNA(Leu) + H(+). It carries out the reaction L-phenylalanyl-tRNA(Phe) + an N-terminal L-alpha-aminoacyl-[protein] = an N-terminal L-phenylalanyl-L-alpha-aminoacyl-[protein] + tRNA(Phe). Functionally, functions in the N-end rule pathway of protein degradation where it conjugates Leu, Phe and, less efficiently, Met from aminoacyl-tRNAs to the N-termini of proteins containing an N-terminal arginine or lysine. The chain is Leucyl/phenylalanyl-tRNA--protein transferase from Nostoc punctiforme (strain ATCC 29133 / PCC 73102).